A 932-amino-acid polypeptide reads, in one-letter code: von Willebrand factor A domain-containing protein DDB_G0292028 (932 aa).

The disordered stretch occupies residues 1–49 (MNFIKKVIGGGSSKSKTDIKIEDEQHEQQHEQQHEKQQIPDKISTSKVN). Residues 15–39 (SKTDIKIEDEQHEQQHEQQHEKQQI) show a composition bias toward basic and acidic residues. The VIT domain occupies 95 to 222 (LTSPGLNTKV…DVTVNITITS (128 aa)). One can recognise a VWFA domain in the interval 342–521 (EFIFVLDCSG…IAMQPTLSNI (180 aa)). Disordered stretches follow at residues 661-752 (QQIN…SQAQ) and 800-834 (TSQI…STSS). Over residues 677 to 686 (TRVQGSSSVF) the composition is skewed to polar residues. Residues 815-834 (SSSPTIQKSSSLPSRPSTSS) are compositionally biased toward low complexity.

In Dictyostelium discoideum (Social amoeba), this protein is von Willebrand factor A domain-containing protein DDB_G0292028.